A 201-amino-acid polypeptide reads, in one-letter code: 3-isopropylmalate dehydratase small subunit (201 aa).

Belongs to the LeuD family. LeuD type 1 subfamily. In terms of assembly, heterodimer of LeuC and LeuD.

The catalysed reaction is (2R,3S)-3-isopropylmalate = (2S)-2-isopropylmalate. The protein operates within amino-acid biosynthesis; L-leucine biosynthesis; L-leucine from 3-methyl-2-oxobutanoate: step 2/4. In terms of biological role, catalyzes the isomerization between 2-isopropylmalate and 3-isopropylmalate, via the formation of 2-isopropylmaleate. The polypeptide is 3-isopropylmalate dehydratase small subunit (Methylorubrum extorquens (strain ATCC 14718 / DSM 1338 / JCM 2805 / NCIMB 9133 / AM1) (Methylobacterium extorquens)).